The following is a 304-amino-acid chain: Aspartate carbamoyltransferase catalytic subunit (304 aa).

Carbamoyl phosphate contacts are provided by Arg-49 and Thr-50. Lys-77 lines the L-aspartate pocket. 3 residues coordinate carbamoyl phosphate: Arg-99, His-127, and Gln-130. The L-aspartate site is built by Arg-160 and Arg-211. Carbamoyl phosphate is bound by residues Ala-252 and Pro-253.

This sequence belongs to the aspartate/ornithine carbamoyltransferase superfamily. ATCase family. Heterododecamer (2C3:3R2) of six catalytic PyrB chains organized as two trimers (C3), and six regulatory PyrI chains organized as three dimers (R2).

It catalyses the reaction carbamoyl phosphate + L-aspartate = N-carbamoyl-L-aspartate + phosphate + H(+). Its pathway is pyrimidine metabolism; UMP biosynthesis via de novo pathway; (S)-dihydroorotate from bicarbonate: step 2/3. Its function is as follows. Catalyzes the condensation of carbamoyl phosphate and aspartate to form carbamoyl aspartate and inorganic phosphate, the committed step in the de novo pyrimidine nucleotide biosynthesis pathway. This is Aspartate carbamoyltransferase catalytic subunit from Bacillus cereus (strain ATCC 10987 / NRS 248).